A 438-amino-acid chain; its full sequence is Transcription termination factor Rho (438 aa).

The region spanning Tyr70–Pro145 is the Rho RNA-BD domain. ATP is bound by residues Gly188–Ala193, Arg200–Glu205, and Arg231.

Belongs to the Rho family. In terms of assembly, homohexamer. The homohexamer assembles into an open ring structure.

Functionally, facilitates transcription termination by a mechanism that involves Rho binding to the nascent RNA, activation of Rho's RNA-dependent ATPase activity, and release of the mRNA from the DNA template. The chain is Transcription termination factor Rho from Helicobacter pylori (strain J99 / ATCC 700824) (Campylobacter pylori J99).